Consider the following 132-residue polypeptide: Riboflavin kinase (132 aa).

Residue 10 to 15 participates in CDP binding; it reads GLGEGR. Residues T39 and N41 each coordinate Mg(2+). Residues T95, Y96, and E103 each contribute to the FMN site. 108 to 111 lines the CDP pocket; that stretch reads MKLR.

Monomer. Mg(2+) is required as a cofactor.

The catalysed reaction is riboflavin + CTP = CDP + FMN + H(+). It functions in the pathway cofactor biosynthesis; FMN biosynthesis; FMN from riboflavin (CTP route): step 1/1. Catalyzes the CTP-dependent phosphorylation of riboflavin (vitamin B2) to form flavin mononucleotide (FMN). Can also utilize UTP as the phosphate donor, although less efficiently, and it is unclear if ATP and GTP can also serve as substrates or not. The chain is Riboflavin kinase (ribK) from Methanocaldococcus jannaschii (strain ATCC 43067 / DSM 2661 / JAL-1 / JCM 10045 / NBRC 100440) (Methanococcus jannaschii).